A 231-amino-acid polypeptide reads, in one-letter code: Chalcone--flavanone isomerase (231 aa).

3 residues coordinate substrate: Thr46, Asn112, and Ser189.

This sequence belongs to the chalcone isomerase family.

The catalysed reaction is a chalcone = a flavanone.. Its pathway is secondary metabolite biosynthesis; flavonoid biosynthesis. Functionally, catalyzes the intramolecular cyclization of bicyclic chalcones into tricyclic (S)-flavanones. Responsible for the isomerization of 4,2',4',6'-tetrahydroxychalcone (also termed chalcone) into naringenin. The polypeptide is Chalcone--flavanone isomerase (CHI) (Hordeum vulgare (Barley)).